We begin with the raw amino-acid sequence, 318 residues long: AT-hook motif nuclear-localized protein 7 (318 aa).

2 disordered regions span residues 1-76 (METS…PSSS) and 241-318 (SDQQ…LPVD). Residues 56-64 (KKRRGRPRK) carry the Bipartite nuclear localization signal motif. Positions 56 to 68 (KKRRGRPRKYEAN) form a DNA-binding region, a.T hook. The PPC domain occupies 120–259 (GSNFTPHVIT…RKQRVEHAPA (140 aa)). Residues 243 to 256 (QQDHQKPRKQRVEH) show a composition bias toward basic and acidic residues. Positions 264–274 (VPPPPSPPPPA) are enriched in pro residues. The span at 288–312 (PPSSFGISSWTNGQDMPRNSATDIN) shows a compositional bias: polar residues.

It is found in the nucleus. Transcription factor that specifically binds AT-rich DNA sequences related to the nuclear matrix attachment regions (MARs). This Arabidopsis thaliana (Mouse-ear cress) protein is AT-hook motif nuclear-localized protein 7.